A 334-amino-acid chain; its full sequence is tRNA dimethylallyltransferase (334 aa).

23–30 (GPTGAGKT) lines the ATP pocket. Residue 25–30 (TGAGKT) participates in substrate binding. 2 interaction with substrate tRNA regions span residues 53 to 56 (DSAL) and 177 to 181 (QRVQR).

This sequence belongs to the IPP transferase family. Monomer. It depends on Mg(2+) as a cofactor.

It carries out the reaction adenosine(37) in tRNA + dimethylallyl diphosphate = N(6)-dimethylallyladenosine(37) in tRNA + diphosphate. Its function is as follows. Catalyzes the transfer of a dimethylallyl group onto the adenine at position 37 in tRNAs that read codons beginning with uridine, leading to the formation of N6-(dimethylallyl)adenosine (i(6)A). This is tRNA dimethylallyltransferase from Polynucleobacter necessarius subsp. necessarius (strain STIR1).